Reading from the N-terminus, the 1434-residue chain is Probable deoxyribonuclease RhsA (1434 aa).

The interval 14–42 (AMHAGNRPNPPDDRPQPCRGKPPTSPGKT) is disordered. A run of 2 helical transmembrane segments spans residues 48 to 68 (FLGALAGAVAGALVAAAVAAA) and 70 to 90 (VFLVGVTGGLAVAAVGALAVF). 3 YD repeats span residues 486-521 (YDAAHRLTRWHDNDQTWARYEYDAQGRCVYTTCADG), 592-628 (DDTGRVSTFTDASGHQWQYDYDAAQRLCGVTDPLGRE), and 847-876 (YDARGLLLRETAPDDTLHYRYDAVGRLTEV).

Belongs to the RHS/WapA nuclease family.

The protein localises to the membrane. Toxic component of a toxin-immunity protein module, which functions as a cellular contact-dependent growth inhibition (CDI) system. This protein may be a nuclease that is specifically inhibited by its cognate immunity protein RhsAI. Upon expression of the C-terminus (residues 1284-1434) in E.coli growth is inhibited, cells elongate, nucleoids condense and plasmid DNA is degraded; these effects are blocked specifically by cognate immunity protein RshIA. Cell contact is necessary for growth inhibition. In Dickeya dadantii (strain 3937) (Erwinia chrysanthemi (strain 3937)), this protein is Probable deoxyribonuclease RhsA (rhsA).